A 312-amino-acid chain; its full sequence is Olfactory receptor 2M3 (312 aa).

Topologically, residues 1–25 (MARENSTFNSDFILLGIFNHSPTHT) are extracellular. Asn-5 is a glycosylation site (N-linked (GlcNAc...) asparagine). The chain crosses the membrane as a helical span at residues 26-49 (FLFFLVLAIFSVAFMGNSVMVLLI). At 50–57 (YLDTQLHT) the chain is on the cytoplasmic side. Residues 58 to 79 (PMYLLLSQLSLMDLMLICTTVP) form a helical membrane-spanning segment. Over 80 to 100 (KMAFNYLSGSKSISMAGCATQ) the chain is Extracellular. A disulfide bridge links Cys-97 with Cys-189. A helical membrane pass occupies residues 101–120 (IFFYTSLLGSECFLLAVMAY). Residues 121–139 (DRYTAICHPLRYTNLMSPK) lie on the Cytoplasmic side of the membrane. The chain crosses the membrane as a helical span at residues 140–158 (ICGLMTAFSWILGSTDGII). Residues 159–195 (DVVATFSFSYCGSREIAHFFCDFPSLLILSCSDTSIF) lie on the Extracellular side of the membrane. The helical transmembrane segment at 196-219 (EKILFICCIVMIVFPVAIIIASYA) threads the bilayer. Topologically, residues 220 to 236 (RVILAVIHMGSGEGRRK) are cytoplasmic. A helical transmembrane segment spans residues 237 to 259 (AFTTCSSHLLVVGMYYGAALFMY). At 260 to 272 (IRPTSDRSPTQDK) the chain is on the extracellular side. The helical transmembrane segment at 273-292 (MVSVFYTILTPMLNPLIYSL) threads the bilayer. At 293–312 (RNKEVTRAFMKILGKGKSGE) the chain is on the cytoplasmic side.

The protein belongs to the G-protein coupled receptor 1 family.

Its subcellular location is the cell membrane. Its function is as follows. Odorant receptor. The polypeptide is Olfactory receptor 2M3 (OR2M3) (Homo sapiens (Human)).